A 132-amino-acid chain; its full sequence is SH2 domain-containing protein 1B2 (132 aa).

In terms of domain architecture, SH2 spans 5 to 101; it reads YYHGCLTKRE…GMVVHLSNPI (97 aa).

In terms of assembly, interacts with SLAMF1 (phosphorylated). Interacts with CD244. Interacts with Src kinases HCK, LYN, FYN, FGR and LCK (via kinase domains). In terms of tissue distribution, expressed in spleen. Expressed in macrophages, CD8(+) T-Cells and NK cells. Conflictingly found only in NK cells.

The protein localises to the cytoplasm. In terms of biological role, cytoplasmic adapter regulating receptors of the signaling lymphocytic activation molecule (SLAM) family. In SLAM signaling may cooperate with Sh2d1a/SAP. Plays a role in regulation of effector functions of natural killer (NK) cells by controlling signal transduction through Cd244/2b4. However, conflicting results are reported which may reflect the use of different strain backgrounds. Proposed to act as an inhibitor of Cd244-mediated NK cell function including cytotoxicity and IFN-gamma production, the latter found also by triggering Klra4 and Klrk1 next to Cd244. Seems to positively regulate Cd244- and Cd84-dependent NK cell functions implicating Cd244-mediated phosphorylation of Vav1. This Mus musculus (Mouse) protein is SH2 domain-containing protein 1B2 (Sh2d1b2).